We begin with the raw amino-acid sequence, 116 residues long: Transcription elongation factor SPT4 homolog 1 (116 aa).

Residues 19 to 39 (CLRCRLVKTYDQFRDSGCENC) form a C4-type zinc finger.

This sequence belongs to the SPT4 family.

The protein resides in the nucleus. In terms of biological role, may regulate transcription elongation by RNA polymerase II. May enhance transcriptional pausing at sites proximal to the promoter, which may in turn facilitate the assembly of an elongation competent RNA polymerase II complex. The protein is Transcription elongation factor SPT4 homolog 1 of Arabidopsis thaliana (Mouse-ear cress).